The sequence spans 131 residues: Large ribosomal subunit protein uL14m (131 aa).

This sequence belongs to the universal ribosomal protein uL14 family. In terms of assembly, component of the mitochondrial large ribosomal subunit (mt-LSU). Mature N.crassa 74S mitochondrial ribosomes consist of a small (37S) and a large (54S) subunit. The 37S small subunit contains a 16S ribosomal RNA (16S mt-rRNA) and 32 different proteins. The 54S large subunit contains a 23S rRNA (23S mt-rRNA) and 42 different proteins.

It localises to the mitochondrion. In terms of biological role, component of the mitochondrial ribosome (mitoribosome), a dedicated translation machinery responsible for the synthesis of mitochondrial genome-encoded proteins, including at least some of the essential transmembrane subunits of the mitochondrial respiratory chain. The mitoribosomes are attached to the mitochondrial inner membrane and translation products are cotranslationally integrated into the membrane. In Neurospora crassa (strain ATCC 24698 / 74-OR23-1A / CBS 708.71 / DSM 1257 / FGSC 987), this protein is Large ribosomal subunit protein uL14m (mrpl38).